A 397-amino-acid polypeptide reads, in one-letter code: GTPase Obg (397 aa).

The 159-residue stretch at 1–159 folds into the Obg domain; it reads MKFVDEATII…RNLRLELKVL (159 aa). A disordered region spans residues 128–148; that stretch reads TRFKSSVNRAPRQTSKGSEGE. The segment covering 129–144 has biased composition (polar residues); it reads RFKSSVNRAPRQTSKG. One can recognise an OBG-type G domain in the interval 160–333; the sequence is ADVGLLGLPN…LVQAVMRWIE (174 aa). Residues 166-173, 191-195, 213-216, 283-286, and 314-316 contribute to the GTP site; these read GLPNAGKS, FTTLV, DIPG, NKVD, and SAL. Mg(2+) contacts are provided by Ser173 and Thr193. The segment covering 336 to 347 has biased composition (acidic residues); it reads AEQEADNPDFAE. Residues 336–397 form a disordered region; it reads AEQEADNPDF…YDVEVVYAPE (62 aa). The span at 349–370 shows a compositional bias: basic and acidic residues; the sequence is EAARRRRMDEEARQKIEADRQA. Residues 378–390 show a composition bias toward acidic residues; that stretch reads DDDDDFDDDDYDV.

It belongs to the TRAFAC class OBG-HflX-like GTPase superfamily. OBG GTPase family. As to quaternary structure, monomer. Mg(2+) serves as cofactor.

It is found in the cytoplasm. An essential GTPase which binds GTP, GDP and possibly (p)ppGpp with moderate affinity, with high nucleotide exchange rates and a fairly low GTP hydrolysis rate. Plays a role in control of the cell cycle, stress response, ribosome biogenesis and in those bacteria that undergo differentiation, in morphogenesis control. The chain is GTPase Obg from Marinobacter nauticus (strain ATCC 700491 / DSM 11845 / VT8) (Marinobacter aquaeolei).